We begin with the raw amino-acid sequence, 321 residues long: Necdin (321 aa).

The disordered stretch occupies residues 1–96 (MSEQSKDLSD…QPGPAPPAPA (96 aa)). A compositionally biased stretch (low complexity) spans 20–35 (SEVHSSPGVSEGVPPS). An MAGE domain is found at 98–297 (LVQKAHELMW…QAWPSRYREA (200 aa)).

As to quaternary structure, binds to the transactivation domains of E2F1 and p53. Binds also SV40 large T antigen and adenovirus E1A. Interacts with nucleobindin 1 and 2. Almost ubiquitous. Detected in fetal brain, lung, liver and kidney; in adult heart, brain, placenta, lung, liver, skeletal muscle, kidney, pancreas, spleen, thymus, prostate, testis, ovary, small intestine and colon. Not detected in peripheral blood leukocytes. In brain, restricted to post-mitotic neurons.

The protein resides in the perikaryon. It is found in the nucleus. Growth suppressor that facilitates the entry of the cell into cell cycle arrest. Functionally similar to the retinoblastoma protein it binds to and represses the activity of cell-cycle-promoting proteins such as SV40 large T antigen, adenovirus E1A, and the transcription factor E2F. Necdin also interacts with p53 and works in an additive manner to inhibit cell growth. Also functions as a transcription factor and directly binds to specific guanosine-rich DNA sequences. This Homo sapiens (Human) protein is Necdin (NDN).